We begin with the raw amino-acid sequence, 345 residues long: Trans-3-hydroxy-L-proline dehydratase (345 aa).

Ser90 (proton acceptor) is an active-site residue. Residues 91-92, Asp252, and 257-258 each bind substrate; these read GS and GT.

This sequence belongs to the proline racemase family.

It carries out the reaction trans-3-hydroxy-L-proline = 1-pyrroline-2-carboxylate + H2O. In terms of biological role, catalyzes the dehydration of trans-3-hydroxy-L-proline (t3LHyp) to Delta(1)-pyrroline-2-carboxylate (Pyr2C). May be involved in a degradation pathway that converts t3LHyp to L-proline, which would allow S.novella to grow on t3LHyp as a sole carbon source. The protein is Trans-3-hydroxy-L-proline dehydratase of Ancylobacter novellus (strain ATCC 8093 / DSM 506 / JCM 20403 / CCM 1077 / IAM 12100 / NBRC 12443 / NCIMB 10456) (Starkeya novella).